An 883-amino-acid chain; its full sequence is UTP--glucose-1-phosphate uridylyltransferase 3, chloroplastic (883 aa).

Residues 1–72 (MANPQASPIL…HQVRHVSTVP (72 aa)) constitute a chloroplast transit peptide.

Belongs to the UDPGP type 1 family. Mg(2+) serves as cofactor.

It is found in the plastid. The protein localises to the chloroplast. It catalyses the reaction alpha-D-glucose 1-phosphate + UTP + H(+) = UDP-alpha-D-glucose + diphosphate. Its activity is regulated as follows. Inhibited by pyrophosphate. In terms of biological role, involved in the biosynthesis of sulfolipids in the chloroplast. Catalyzes the first committed step in sulfolipid biosynthesis. Converts glucose 1-phosphate to UDP-glucose, the precursor of the polar head of sulfolipid. In addition to glucose 1-phosphate, can use galactose 1-phosphate, but with much lower activity. No uridyltransferase activity with other hexose monophosphates. Specific for UTP and cannot use ATP, CTP, and GTP. This chain is UTP--glucose-1-phosphate uridylyltransferase 3, chloroplastic, found in Arabidopsis thaliana (Mouse-ear cress).